The sequence spans 260 residues: Acetylglutamate kinase (260 aa).

Substrate is bound by residues 46–47 (GG), arginine 68, and asparagine 160.

This sequence belongs to the acetylglutamate kinase family. ArgB subfamily.

The protein localises to the cytoplasm. It carries out the reaction N-acetyl-L-glutamate + ATP = N-acetyl-L-glutamyl 5-phosphate + ADP. It functions in the pathway amino-acid biosynthesis; L-arginine biosynthesis; N(2)-acetyl-L-ornithine from L-glutamate: step 2/4. In terms of biological role, catalyzes the ATP-dependent phosphorylation of N-acetyl-L-glutamate. The sequence is that of Acetylglutamate kinase from Shewanella denitrificans (strain OS217 / ATCC BAA-1090 / DSM 15013).